Reading from the N-terminus, the 510-residue chain is Inositol-3-phosphate synthase isozyme 2 (510 aa).

This sequence belongs to the myo-inositol 1-phosphate synthase family. It depends on NAD(+) as a cofactor. In terms of tissue distribution, expressed in siliques, leaves, roots, seed endosperm, but not in embryos. Highest expression in seeds. In leaves, only expressed in hydathodes and vascular tissue.

Its subcellular location is the cytoplasm. It catalyses the reaction D-glucose 6-phosphate = 1D-myo-inositol 3-phosphate. The protein operates within polyol metabolism; myo-inositol biosynthesis; myo-inositol from D-glucose 6-phosphate: step 1/2. In terms of biological role, key enzyme in myo-inositol biosynthesis pathway that catalyzes the conversion of glucose 6-phosphate to 1-myo-inositol 1-phosphate in a NAD-dependent manner. The sequence is that of Inositol-3-phosphate synthase isozyme 2 (IPS2) from Arabidopsis thaliana (Mouse-ear cress).